Consider the following 330-residue polypeptide: Phosphate acyltransferase (330 aa).

The protein belongs to the PlsX family. In terms of assembly, homodimer. Probably interacts with PlsY.

The protein resides in the cytoplasm. The catalysed reaction is a fatty acyl-[ACP] + phosphate = an acyl phosphate + holo-[ACP]. It functions in the pathway lipid metabolism; phospholipid metabolism. Functionally, catalyzes the reversible formation of acyl-phosphate (acyl-PO(4)) from acyl-[acyl-carrier-protein] (acyl-ACP). This enzyme utilizes acyl-ACP as fatty acyl donor, but not acyl-CoA. The chain is Phosphate acyltransferase from Streptococcus agalactiae serotype Ia (strain ATCC 27591 / A909 / CDC SS700).